The primary structure comprises 272 residues: 2-amino-3,7-dideoxy-D-threo-hept-6-ulosonate synthase (272 aa).

D33 acts as the Proton acceptor in catalysis. 1-deoxy-D-threo-hexo-2,5-diulose 6-phosphate contacts are provided by residues 33-37 (DHGVS) and 153-155 (YPR). Catalysis depends on Y153, which acts as the Proton donor. K184 (schiff-base intermediate with substrate) is an active-site residue. Residues 209–210 (GG) and 237–238 (GR) contribute to the 1-deoxy-D-threo-hexo-2,5-diulose 6-phosphate site.

It belongs to the DeoC/FbaB aldolase family. ADHS subfamily. In terms of assembly, homodecamer.

It catalyses the reaction 1-deoxy-D-threo-hexo-2,5-diulose 6-phosphate + L-aspartate 4-semialdehyde = 2,3-dioxopropyl phosphate + 2-amino-2,3,7-trideoxy-D-lyxo-hept-6-ulosonate. In terms of biological role, catalyzes a transaldol reaction between 6-deoxy-5-ketofructose 1-phosphate (DKFP) and L-aspartate semialdehyde (ASA) with an elimination of hydroxypyruvaldehyde phosphate to yield 2-amino-3,7-dideoxy-D-threo-hept-6-ulosonate (ADH). Plays a key role in an alternative pathway of the biosynthesis of 3-dehydroquinate (DHQ), which is involved in the canonical pathway for the biosynthesis of aromatic amino acids. This Methanococcus maripaludis (strain C5 / ATCC BAA-1333) protein is 2-amino-3,7-dideoxy-D-threo-hept-6-ulosonate synthase.